Here is a 1006-residue protein sequence, read N- to C-terminus: Cytosolic carboxypeptidase 3 (1006 aa).

Positions 304 to 576 constitute a Peptidase M14 domain; it reads YPYTYSNLQE…HFCDSLLDYC (273 aa). Residues histidine 368, glutamate 371, and histidine 464 each contribute to the Zn(2+) site. Residue glutamate 540 is the Proton donor/acceptor of the active site. A disordered region spans residues 790–810; sequence ESHHQLKSKAKRCSSFQSKRT.

This sequence belongs to the peptidase M14 family. Zn(2+) serves as cofactor. In terms of tissue distribution, widely expressed. Expressed abundantly in tissues with m otile cilia such as testis, lung and trachea. Abundantly expressed in pituitary and kidney, moderately expressed in brain, eye, fat, pancreas, stomach, and adrenal.

It is found in the cytoplasm. Its subcellular location is the cytosol. It carries out the reaction (L-glutamyl)(n+1)-gamma-L-glutamyl-L-glutamyl-[protein] + H2O = (L-glutamyl)(n)-gamma-L-glutamyl-L-glutamyl-[protein] + L-glutamate. Its function is as follows. Metallocarboxypeptidase that mediates deglutamylation of tubulin and non-tubulin target proteins. Catalyzes the removal of polyglutamate side chains present on the gamma-carboxyl group of glutamate residues within the C-terminal tail of tubulin protein. Specifically cleaves tubulin long-side-chains, while it is not able to remove the branching point glutamate. Also catalyzes the removal of polyglutamate residues from the carboxy-terminus of non-tubulin proteins such as MYLK. May catalyze the hydrolysis of aspartate from the carboxy-terminus of target proteins. Does not show detyrosinase or deglycylase activities from the carboxy-terminus of target proteins. The polypeptide is Cytosolic carboxypeptidase 3 (Mus musculus (Mouse)).